Reading from the N-terminus, the 169-residue chain is Lipoprotein signal peptidase (169 aa).

Transmembrane regions (helical) follow at residues 12–32, 70–90, and 102–122; these read WLWL…WILG, WFFA…MYRS, and AFII…GFVV. Catalysis depends on residues aspartate 123 and aspartate 141. Residues 137 to 157 traverse the membrane as a helical segment; it reads FNLADSFICVGAAMIVLEGFL.

Belongs to the peptidase A8 family.

It is found in the cell inner membrane. The catalysed reaction is Release of signal peptides from bacterial membrane prolipoproteins. Hydrolyzes -Xaa-Yaa-Zaa-|-(S,diacylglyceryl)Cys-, in which Xaa is hydrophobic (preferably Leu), and Yaa (Ala or Ser) and Zaa (Gly or Ala) have small, neutral side chains.. It functions in the pathway protein modification; lipoprotein biosynthesis (signal peptide cleavage). Its function is as follows. This protein specifically catalyzes the removal of signal peptides from prolipoproteins. In Serratia proteamaculans (strain 568), this protein is Lipoprotein signal peptidase.